Reading from the N-terminus, the 974-residue chain is Cell division control protein 15 (974 aa).

The Protein kinase domain maps to 25-272 (YHLKQVIGRG…ADQLLKHVWI (248 aa)). Residues 31–39 (IGRGSYGVV) and K54 contribute to the ATP site. Catalysis depends on D146, which acts as the Proton acceptor. Positions 360–702 (CSLENIADTI…ITAICVEMSL (343 aa)) are self association domain. The segment covering 554 to 563 (SSSLPLSSSP) has biased composition (low complexity). The disordered stretch occupies residues 554–592 (SSSLPLSSSPTRNSPVNSVQSPSRSPVHSLMATRPSSPM). S561 and S567 each carry phosphoserine. The span at 564–579 (TRNSPVNSVQSPSRSP) shows a compositional bias: polar residues. The tract at residues 751–974 (TVGSSESHSV…FSVPITTFQT (224 aa)) is auto-inhibitory domain. The residue at position 870 (T870) is a Phosphothreonine. The interval 941–974 (AAIGSSPTKDERSNLRSSKDKSDGFSVPITTFQT) is disordered. Positions 948–963 (TKDERSNLRSSKDKSD) are enriched in basic and acidic residues.

Belongs to the protein kinase superfamily. Ser/Thr protein kinase family. Homodimer. Interacts with TEM1. Post-translationally, phosphorylation by CDK1 reduces the binding to the mother spindle pole body. The extent of phosphorylation gradually increases during cell-cycle progression until some point during late anaphase/telophase when it is rapidly dephosphorylated by CDC14. Phosphorylation inhibits kinase activity and dephosphorylation by CDC14 activates CDC15.

The protein localises to the cytoplasm. It is found in the cytoskeleton. The protein resides in the spindle pole. Its subcellular location is the bud neck. It carries out the reaction L-seryl-[protein] + ATP = O-phospho-L-seryl-[protein] + ADP + H(+). The enzyme catalyses L-threonyl-[protein] + ATP = O-phospho-L-threonyl-[protein] + ADP + H(+). Its activity is regulated as follows. Kinase activity is inhibited by phosphorylation and activated by dephosphorylation by CDC14. In terms of biological role, protein kinase of the mitotic exit network (MEN) essential for late nuclear division in the mitotic cycle. Promotes mitotic exit by phosphorylating DBF2 and directly switching on DBF2 kinase activity. Involved in the localization of DBF2 and DBF20 to the neck which is necessary to undergo cytokinesis. Plays a role in segregation of chromosomes during recovery from spindle checkpoint activation. Required for spindle pole localization of CDK1 and inactivation of CDC2 kinase activity at the end of mitosis. Required for spindle disassembly after meiosis II and plays a role in spore morphogenesis. This chain is Cell division control protein 15 (CDC15), found in Saccharomyces cerevisiae (strain ATCC 204508 / S288c) (Baker's yeast).